The chain runs to 470 residues: Protein escargot (470 aa).

Positions 271–309 (LNLNTSQPGEQAAAKTGDMSPETMPNASAKKDKNQPPRY) are disordered. C2H2-type zinc fingers lie at residues 309–331 (YQCPDCQKSYSTFSGLTKHQQFH), 344–366 (FSCKDCDKTYVSLGALKMHIRTH), 370–392 (CKCNLCGKAFSRPWLLQGHIRTH), and 398–420 (FSCQHCHRAFADRSNLRAHLQTH). A C2H2-type 5; atypical zinc finger spans residues 426 to 449 (YSCTSCSKTFSRMSLLTKHSEGGC). Positions 448-470 (GCPGGSAGSSSSSELNYAGYAEP) are disordered.

The protein belongs to the snail C2H2-type zinc-finger protein family. Expression is complex and dynamic. In early embryogenesis, expression begins on the dorsal side of the embryo. Expressed in a pattern of longitudinal stripes early in germband elongation. Later in embryogenesis, expression is in cells that correspond to the wing, haltere, leg and genital imaginal disks and the abdominal histoblasts. In the embryonic leg disk, expression is restricted to imaginal cells. Also expressed in the central nervous system (CNS), tracheae and head of stage 14 embryos. CNS and tracheal expression decays during later stages, though head expression persists until late in embryogenesis. In third instar larvae, expression is seen in the brain and in regions of many imaginal tissues including the eye-antennal, wing, leg and haltere disks. Expressed in embryonic, larval and adult male germline stem cells and in the somatic cells of the embryonic gonads.

The protein localises to the nucleus. Transcription factor that can both stimulate and repress transcription. Binds to the consensus DNA sequence 5'-A/GCAGGTG-3'. Regulates cell motility and adhesion during tracheal morphogenesis by stimulating transcription of the DE-cadherin gene shg at branch tips, thereby promoting tracheal tube fusion. Maintains diploidy in imaginal cells by inhibiting the transcription of genes required for endoreplication. Required for development of the genital disk and acts as an intrinsic determinant of wing cell fate. The somatic protein is required for maintenance of male germ cells. Acts with other members of the snail protein family to control embryonic central nervous system development. The protein is Protein escargot (esg) of Drosophila melanogaster (Fruit fly).